Reading from the N-terminus, the 371-residue chain is Methionine import ATP-binding protein MetN (371 aa).

Residues 1 to 22 are disordered; the sequence is MSEPFMNAPWQPPGDHPALKSP. The ABC transporter domain maps to 27 to 268; the sequence is ILIDSVRKLY…PRHEVTRRFV (242 aa). 65–72 lines the ATP pocket; it reads GRSGAGKS.

This sequence belongs to the ABC transporter superfamily. Methionine importer (TC 3.A.1.24) family. In terms of assembly, the complex is composed of two ATP-binding proteins (MetN), two transmembrane proteins (MetI) and a solute-binding protein (MetQ).

It localises to the cell inner membrane. It carries out the reaction L-methionine(out) + ATP + H2O = L-methionine(in) + ADP + phosphate + H(+). It catalyses the reaction D-methionine(out) + ATP + H2O = D-methionine(in) + ADP + phosphate + H(+). In terms of biological role, part of the ABC transporter complex MetNIQ involved in methionine import. Responsible for energy coupling to the transport system. This Rhodopseudomonas palustris (strain BisB5) protein is Methionine import ATP-binding protein MetN.